A 361-amino-acid polypeptide reads, in one-letter code: Geranylgeranyl pyrophosphate synthase 3 (361 aa).

The disordered stretch occupies residues 44–63 (DSNGSKELAPNGAQSRVQKP). Isopentenyl diphosphate contacts are provided by lysine 81, arginine 84, and histidine 113. Mg(2+)-binding residues include aspartate 120 and aspartate 124. A dimethylallyl diphosphate-binding site is contributed by arginine 129. Arginine 130 contacts isopentenyl diphosphate. Residues lysine 207, threonine 208, and glutamine 244 each coordinate dimethylallyl diphosphate. Aspartate 247 contacts Mg(2+). 3 residues coordinate dimethylallyl diphosphate: asparagine 251, lysine 261, and lysine 271.

It belongs to the FPP/GGPP synthase family. Requires Mg(2+) as cofactor.

It carries out the reaction isopentenyl diphosphate + dimethylallyl diphosphate = (2E)-geranyl diphosphate + diphosphate. It catalyses the reaction isopentenyl diphosphate + (2E)-geranyl diphosphate = (2E,6E)-farnesyl diphosphate + diphosphate. The enzyme catalyses isopentenyl diphosphate + (2E,6E)-farnesyl diphosphate = (2E,6E,10E)-geranylgeranyl diphosphate + diphosphate. Its function is as follows. Geranylgeranyl pyrophosphate synthase; part of the gene cluster 25 that mediates the biosynthesis of an isoprenoid secondary metabolite. This is Geranylgeranyl pyrophosphate synthase 3 (GGS3) from Zymoseptoria tritici (strain CBS 115943 / IPO323) (Speckled leaf blotch fungus).